We begin with the raw amino-acid sequence, 574 residues long: MSRRLIYVLNINRKSTHKIQENEIYTYFSHCNIDHTSTELDFVVKNYDLNRRQHVTGYTALHCYLYNNYFTNDVLKILLNHDVNVTMKTSSGRMPVYILLTRCCNISHDVVIDMIDKDKNHLSHRDYSNLLLEYIKSRYMLLKEEDIDENIVSTLLDKGIDPNFKQDGYTALHYYYLCLAHVYKPGECRKPITIKKAKRIISLFIQHGANLNALDNCGNTPFHLYLSIEMCNNIHMTKMLLTFNPNFKICNNHGLTPILCYITSDYIQHDILVMLIHHYETNVGEMPIDERRMIVFEFIKTYSTRPADSITYLMNRFKNINIYTRYEGKTLLHVACEYNNTQVIDYLIRINGDINALTDNNKHATQLIIDNKENSPYTINCLLYILRYIVDKNVIRSLVDQLPSLPIFDIKSFEKFISYCILLDDTFYDRHVKNRDSKTYRYAFSKYMSFDKYDGIITKCHDETMLLKLSTVLDTTLYAVLRCHNSRKLRRYLTELKKYNNDKSFKIYSNIMNERYLNVYYKDMYVSKVYDKLFPVFTDKNCLLTLLPSEIIYEILYMLTINDLYNISYPPTKV.

6 ANK repeats span residues 56 to 87 (TGYT…NVTM), 135 to 164 (IKSR…DPNF), 167 to 213 (DGYT…NLNA), 217 to 249 (CGNT…NFKI), 253 to 285 (HGLT…NVGE), and 327 to 356 (EGKT…DINA). Positions 541-574 (NCLLTLLPSEIIYEILYMLTINDLYNISYPPTKV) constitute an F-box domain.

The chain is Ankyrin repeat protein B18 from Homo sapiens (Human).